Reading from the N-terminus, the 201-residue chain is Ras-related protein Rab-1C (201 aa).

Residues 1-20 (MGCSPSKEGNGSFSSTSTSF) are disordered. Gly-2 is lipidated: N-myristoyl glycine. Residue Cys-3 is the site of S-palmitoyl cysteine attachment. Residues 40-48 (GDSGVGKSC), 58-65 (FTDSYIST), 88-92 (DTAGQ), 146-149 (NKCD), and 176-178 (SAK) contribute to the GTP site. An Effector region motif is present at residues 62 to 70 (YISTIGVDF).

Belongs to the small GTPase superfamily. Rab family. In terms of processing, although this sequence lacks the C-terminal cysteine motifs subject to isoprenylation in other Rab proteins, it does have N-terminal myristoylation and S-palmitoylation sequence motifs.

In Dictyostelium discoideum (Social amoeba), this protein is Ras-related protein Rab-1C (Rab1C).